A 526-amino-acid polypeptide reads, in one-letter code: Bifunctional purine biosynthesis protein PurH (526 aa).

The MGS-like domain maps to 1–148 (MSLNNIIKNA…KNYKDVIVIV (148 aa)).

The protein belongs to the PurH family.

It carries out the reaction (6R)-10-formyltetrahydrofolate + 5-amino-1-(5-phospho-beta-D-ribosyl)imidazole-4-carboxamide = 5-formamido-1-(5-phospho-D-ribosyl)imidazole-4-carboxamide + (6S)-5,6,7,8-tetrahydrofolate. The enzyme catalyses IMP + H2O = 5-formamido-1-(5-phospho-D-ribosyl)imidazole-4-carboxamide. It participates in purine metabolism; IMP biosynthesis via de novo pathway; 5-formamido-1-(5-phospho-D-ribosyl)imidazole-4-carboxamide from 5-amino-1-(5-phospho-D-ribosyl)imidazole-4-carboxamide (10-formyl THF route): step 1/1. It functions in the pathway purine metabolism; IMP biosynthesis via de novo pathway; IMP from 5-formamido-1-(5-phospho-D-ribosyl)imidazole-4-carboxamide: step 1/1. This chain is Bifunctional purine biosynthesis protein PurH, found in Buchnera aphidicola subsp. Schizaphis graminum (strain Sg).